Here is a 124-residue protein sequence, read N- to C-terminus: MINRRMKTGFVFHLLLLLLPLVVLVTSSRRTADDVTLHIIPQHQGAALPDGFYIYQRLNEHGIGIKSITPEDDSIIVRLSSPEQSRAASEVLKSALPQASVIARQPDAIPIWRQKLSQQPFKLG.

The Cytoplasmic segment spans residues 1–7 (MINRRMK). Residues 8-28 (TGFVFHLLLLLLPLVVLVTSS) traverse the membrane as a helical segment. At 29 to 124 (RRTADDVTLH…KLSQQPFKLG (96 aa)) the chain is on the periplasmic side.

It belongs to the MzrA family. In terms of assembly, interacts with EnvZ.

It is found in the cell inner membrane. Modulates the activity of the EnvZ/OmpR two-component regulatory system, probably by directly modulating EnvZ enzymatic activity and increasing stability of phosphorylated OmpR. The protein is Modulator protein MzrA of Musicola paradisiaca (strain Ech703) (Dickeya paradisiaca).